The chain runs to 129 residues: Small ribosomal subunit protein uS12 (129 aa).

Aspartate 89 is subject to 3-methylthioaspartic acid.

Belongs to the universal ribosomal protein uS12 family. Part of the 30S ribosomal subunit. Contacts proteins S8 and S17. May interact with IF1 in the 30S initiation complex.

In terms of biological role, with S4 and S5 plays an important role in translational accuracy. Its function is as follows. Interacts with and stabilizes bases of the 16S rRNA that are involved in tRNA selection in the A site and with the mRNA backbone. Located at the interface of the 30S and 50S subunits, it traverses the body of the 30S subunit contacting proteins on the other side and probably holding the rRNA structure together. The combined cluster of proteins S8, S12 and S17 appears to hold together the shoulder and platform of the 30S subunit. The protein is Small ribosomal subunit protein uS12 of Rickettsia akari (strain Hartford).